A 212-amino-acid polypeptide reads, in one-letter code: 3-demethoxyubiquinol 3-hydroxylase (212 aa).

The Fe cation site is built by E61, E91, H94, E143, E175, and H178.

This sequence belongs to the COQ7 family. Fe cation is required as a cofactor.

Its subcellular location is the cell membrane. The enzyme catalyses a 5-methoxy-2-methyl-3-(all-trans-polyprenyl)benzene-1,4-diol + AH2 + O2 = a 3-demethylubiquinol + A + H2O. It functions in the pathway cofactor biosynthesis; ubiquinone biosynthesis. Catalyzes the hydroxylation of 2-nonaprenyl-3-methyl-6-methoxy-1,4-benzoquinol during ubiquinone biosynthesis. In Paraburkholderia phytofirmans (strain DSM 17436 / LMG 22146 / PsJN) (Burkholderia phytofirmans), this protein is 3-demethoxyubiquinol 3-hydroxylase.